The following is a 253-amino-acid chain: Ribosomal RNA small subunit methyltransferase G (253 aa).

Residues Gly84, Leu89, 136-137, and Arg155 contribute to the S-adenosyl-L-methionine site; that span reads IE.

Belongs to the methyltransferase superfamily. RNA methyltransferase RsmG family.

The protein localises to the cytoplasm. Functionally, specifically methylates the N7 position of a guanine in 16S rRNA. In Prochlorococcus marinus (strain SARG / CCMP1375 / SS120), this protein is Ribosomal RNA small subunit methyltransferase G.